The sequence spans 83 residues: Cytochrome b559 subunit alpha (83 aa).

Residues 21-35 (VIHSITIPSLFIAGW) form a helical membrane-spanning segment. Histidine 23 contacts heme.

The protein belongs to the PsbE/PsbF family. In terms of assembly, heterodimer of an alpha subunit and a beta subunit. PSII is composed of 1 copy each of membrane proteins PsbA, PsbB, PsbC, PsbD, PsbE, PsbF, PsbH, PsbI, PsbJ, PsbK, PsbL, PsbM, PsbT, PsbX, PsbY, PsbZ, Psb30/Ycf12, at least 3 peripheral proteins of the oxygen-evolving complex and a large number of cofactors. It forms dimeric complexes. It depends on heme b as a cofactor.

The protein resides in the plastid. The protein localises to the chloroplast thylakoid membrane. This b-type cytochrome is tightly associated with the reaction center of photosystem II (PSII). PSII is a light-driven water:plastoquinone oxidoreductase that uses light energy to abstract electrons from H(2)O, generating O(2) and a proton gradient subsequently used for ATP formation. It consists of a core antenna complex that captures photons, and an electron transfer chain that converts photonic excitation into a charge separation. The chain is Cytochrome b559 subunit alpha from Huperzia lucidula (Shining clubmoss).